The primary structure comprises 1052 residues: uncharacterized protein (1052 aa).

Belongs to the IIV-6 050L family.

This is an uncharacterized protein from Invertebrate iridescent virus 6 (IIV-6).